The primary structure comprises 119 residues: NADH-quinone oxidoreductase subunit A (119 aa).

3 helical membrane-spanning segments follow: residues 7–27 (YPVL…VSIG), 63–83 (LVAI…PWGV), and 88–108 (IGWP…LGFA).

Belongs to the complex I subunit 3 family. As to quaternary structure, NDH-1 is composed of 14 different subunits. Subunits NuoA, H, J, K, L, M, N constitute the membrane sector of the complex.

It is found in the cell inner membrane. The enzyme catalyses a quinone + NADH + 5 H(+)(in) = a quinol + NAD(+) + 4 H(+)(out). In terms of biological role, NDH-1 shuttles electrons from NADH, via FMN and iron-sulfur (Fe-S) centers, to quinones in the respiratory chain. The immediate electron acceptor for the enzyme in this species is believed to be ubiquinone. Couples the redox reaction to proton translocation (for every two electrons transferred, four hydrogen ions are translocated across the cytoplasmic membrane), and thus conserves the redox energy in a proton gradient. The sequence is that of NADH-quinone oxidoreductase subunit A from Burkholderia ambifaria (strain MC40-6).